We begin with the raw amino-acid sequence, 780 residues long: Translation initiation factor IF-2 (780 aa).

The disordered stretch occupies residues 24 to 194 (AEEKGFPVKN…KGAPERKNKA (171 aa)). 2 stretches are compositionally biased toward polar residues: residues 59 to 71 (EQSA…QRKV) and 80 to 90 (QGTARTQTTAQ). Composition is skewed to low complexity over residues 98–114 (NQTQ…QTGN) and 132–158 (NNNT…SRNN). Positions 159 to 176 (RNNRRRNNNNNNRYKKNQ) are enriched in basic residues. Basic and acidic residues predominate over residues 177–194 (RIKDTNQHKGAPERKNKA). The tr-type G domain maps to 281-450 (PRAPVVTIMG…LLQSDVLELK (170 aa)). The G1 stretch occupies residues 290–297 (GHVDHGKT). Position 290-297 (290-297 (GHVDHGKT)) interacts with GTP. The G2 stretch occupies residues 315–319 (GITQA). The segment at 336 to 339 (DTPG) is G3. GTP is bound by residues 336–340 (DTPGH) and 390–393 (NKID). Residues 390-393 (NKID) form a G4 region. A G5 region spans residues 426 to 428 (SAK).

This sequence belongs to the TRAFAC class translation factor GTPase superfamily. Classic translation factor GTPase family. IF-2 subfamily.

It localises to the cytoplasm. One of the essential components for the initiation of protein synthesis. Protects formylmethionyl-tRNA from spontaneous hydrolysis and promotes its binding to the 30S ribosomal subunits. Also involved in the hydrolysis of GTP during the formation of the 70S ribosomal complex. The sequence is that of Translation initiation factor IF-2 from Levilactobacillus brevis (strain ATCC 367 / BCRC 12310 / CIP 105137 / JCM 1170 / LMG 11437 / NCIMB 947 / NCTC 947) (Lactobacillus brevis).